We begin with the raw amino-acid sequence, 453 residues long: UDP-N-acetylmuramoylalanine--D-glutamate ligase (453 aa).

Gly-115–Thr-121 contributes to the ATP binding site.

Belongs to the MurCDEF family.

Its subcellular location is the cytoplasm. The catalysed reaction is UDP-N-acetyl-alpha-D-muramoyl-L-alanine + D-glutamate + ATP = UDP-N-acetyl-alpha-D-muramoyl-L-alanyl-D-glutamate + ADP + phosphate + H(+). The protein operates within cell wall biogenesis; peptidoglycan biosynthesis. Its function is as follows. Cell wall formation. Catalyzes the addition of glutamate to the nucleotide precursor UDP-N-acetylmuramoyl-L-alanine (UMA). The protein is UDP-N-acetylmuramoylalanine--D-glutamate ligase of Geotalea uraniireducens (strain Rf4) (Geobacter uraniireducens).